Consider the following 322-residue polypeptide: Undecaprenyl-phosphate 4-deoxy-4-formamido-L-arabinose transferase (322 aa).

Topologically, residues 1–235 (MFEIHPVKKV…TCLTTTPLRM (235 aa)) are cytoplasmic. A helical transmembrane segment spans residues 236–256 (LSLLGSIIAIGGFSIAVLLVI). Over 257 to 269 (LRLTFGPQWAAEG) the chain is Periplasmic. The chain crosses the membrane as a helical span at residues 270 to 290 (VFMLFAVLFTFIGAQFIGMGL). The Cytoplasmic segment spans residues 291–322 (LGEYIGRIYTDVRARPRYFVQQVIRPSSKENE).

The protein belongs to the glycosyltransferase 2 family.

The protein resides in the cell inner membrane. It carries out the reaction UDP-4-deoxy-4-formamido-beta-L-arabinose + di-trans,octa-cis-undecaprenyl phosphate = 4-deoxy-4-formamido-alpha-L-arabinopyranosyl di-trans,octa-cis-undecaprenyl phosphate + UDP. It participates in glycolipid biosynthesis; 4-amino-4-deoxy-alpha-L-arabinose undecaprenyl phosphate biosynthesis; 4-amino-4-deoxy-alpha-L-arabinose undecaprenyl phosphate from UDP-4-deoxy-4-formamido-beta-L-arabinose and undecaprenyl phosphate: step 1/2. It functions in the pathway bacterial outer membrane biogenesis; lipopolysaccharide biosynthesis. In terms of biological role, catalyzes the transfer of 4-deoxy-4-formamido-L-arabinose from UDP to undecaprenyl phosphate. The modified arabinose is attached to lipid A and is required for resistance to polymyxin and cationic antimicrobial peptides. The sequence is that of Undecaprenyl-phosphate 4-deoxy-4-formamido-L-arabinose transferase from Escherichia coli O157:H7 (strain EC4115 / EHEC).